We begin with the raw amino-acid sequence, 85 residues long: Cytochrome b (85 aa).

3 consecutive transmembrane segments (helical) span residues 1–8 (LTGLFLAM), 32–53 (WLIRNIHANGASFFFICIYLHI), and 68–85 (WNVGVVLLLLVMMTAFVG). Heme b contacts are provided by histidine 38 and histidine 52.

Belongs to the cytochrome b family. The cytochrome bc1 complex contains 3 respiratory subunits (MT-CYB, CYC1 and UQCRFS1), 2 core proteins (UQCRC1 and UQCRC2) and probably 6 low-molecular weight proteins. Heme b serves as cofactor.

The protein localises to the mitochondrion inner membrane. In terms of biological role, component of the ubiquinol-cytochrome c reductase complex (complex III or cytochrome b-c1 complex) that is part of the mitochondrial respiratory chain. The b-c1 complex mediates electron transfer from ubiquinol to cytochrome c. Contributes to the generation of a proton gradient across the mitochondrial membrane that is then used for ATP synthesis. The polypeptide is Cytochrome b (mt-cyb) (Pomoxis nigromaculatus (Black crappie)).